Consider the following 685-residue polypeptide: Amino acid transporter heavy chain SLC3A1 (685 aa).

The span at 1–11 (MAEDKSKRDSI) shows a compositional bias: basic and acidic residues. The tract at residues 1-56 (MAEDKSKRDSIEMSMKGCQTNNGFVHNEDILEQTPDPGSSTDNLKHSTRGILGSQE) is disordered. Topologically, residues 1 to 87 (MAEDKSKRDS…GQARYRIPRE (87 aa)) are cytoplasmic. At Ser-10 the chain carries Phosphoserine. Residues 88-108 (ILFWLTVASVLVLIAATIAII) traverse the membrane as a helical; Signal-anchor for type II membrane protein segment. The Extracellular portion of the chain corresponds to 109–685 (ALSPKCLDWW…SVLNILYTSC (577 aa)). Asn-214 is a binding site for Ca(2+). N-linked (GlcNAc...) asparagine glycosylation is found at Asn-214 and Asn-261. Cysteines 242 and 273 form a disulfide. 4 residues coordinate Ca(2+): Asp-284, Phe-318, Leu-319, and Glu-321. Asn-332, Asn-495, Asn-513, and Asn-575 each carry an N-linked (GlcNAc...) asparagine glycan. Intrachain disulfides connect Cys-571–Cys-666 and Cys-673–Cys-685.

Disulfide-linked heterodimer composed of the catalytic light subunit SLC7A9 and the heavy subunit SLC3A1. The heterodimer is the minimal functional unit. Assembles in non-covalently linked heterotetramers (dimers of heterodimers) and higher order oligomers; the oligomerization is mediated by SLC3A1 likely to prevent degradation in the endoplasmic reticulum and facilitate heteromer trafficking to the plasma membrane. Disulfide-linked heterodimer composed of the catalytic light subunit SLC7A13 and the heavy subunit SLC3A1. Expressed in the brush border membrane in the kidney (at protein level). Predominantly expressed in the kidney, small intestine and pancreas. Weakly expressed in liver.

It is found in the cell membrane. The protein localises to the apical cell membrane. In terms of biological role, acts as a chaperone that facilitates biogenesis and trafficking of functional transporter heteromers to the plasma membrane. Associates with SLC7A9 to form a functional transporter complex that mediates the electrogenic exchange between cationic amino acids and neutral amino acids, with a stoichiometry of 1:1. SLC7A9-SLC3A1 transporter has system b(0,+)-like activity with high affinity for extracellular cationic amino acids and L-cystine and lower affinity for intracellular neutral amino acids. Substrate exchange is driven by high concentration of intracellular neutral amino acids and the intracellular reduction of L-cystine to L-cysteine. SLC7A9-SLC3A1 acts as a major transporter for reabsorption of L-cystine and dibasic amino acids across the brush border membrane in early proximal tubules. Associates with SLC7A13 to form a functional complex that transports anionic and neutral amino acids via exchange or facilitated diffusion. SLC7A13-SLC3A1 may act as a major transporter for L-cystine in late proximal tubules, ensuring its reabsorption from the luminal fluid in exchange for cytosolic L-glutamate or L-aspartate. The protein is Amino acid transporter heavy chain SLC3A1 of Homo sapiens (Human).